The sequence spans 534 residues: Tyrosine-protein kinase Fyn (534 aa).

Glycine 2 carries the N-myristoyl glycine lipid modification. Residues cysteine 3 and cysteine 6 are each lipidated (S-palmitoyl cysteine). Threonine 12 carries the post-translational modification Phosphothreonine; by PKC. The interval 15-39 (TDERDGSLTQSSGYRYGTDPTPQHY) is disordered. One can recognise an SH3 domain in the interval 82 to 143 (TGVTLFEALY…PSNYVAPVDS (62 aa)). The SH2 domain maps to 149 to 246 (WYFGKLGRKD…GLCFNLTVIA (98 aa)). Residues 268–521 (LFLEQKLGQG…YLQGFLEDYF (254 aa)) enclose the Protein kinase domain. ATP contacts are provided by residues 274-282 (LGQGCFAEV) and lysine 296. Residue aspartate 387 is the Proton acceptor of the active site. Tyrosine 417 is modified (phosphotyrosine; by autocatalysis). Tyrosine 528 bears the Phosphotyrosine mark.

The protein belongs to the protein kinase superfamily. Tyr protein kinase family. SRC subfamily. In terms of assembly, associates through its SH3 domain, to the p85 subunit of phosphatidylinositol 3-kinase. The cofactor is Mn(2+). Thymus and spleen.

Its subcellular location is the cytoplasm. It localises to the nucleus. The protein resides in the cell membrane. The protein localises to the perikaryon. It catalyses the reaction L-tyrosyl-[protein] + ATP = O-phospho-L-tyrosyl-[protein] + ADP + H(+). Its activity is regulated as follows. Inhibited by phosphorylation of Tyr-528 by leukocyte common antigen and activated by dephosphorylation of this site. Functionally, tyrosine-protein kinase implicated in the control of cell growth. Plays a role in the regulation of intracellular calcium levels. Required in brain development and mature brain function with important roles in the regulation of axon growth, axon guidance, and neurite extension. Role in CNTN1-mediated signaling. The sequence is that of Tyrosine-protein kinase Fyn (FYN) from Gallus gallus (Chicken).